A 133-amino-acid polypeptide reads, in one-letter code: Ribonuclease VapC29 (133 aa).

Residues 3–122 (VLLDANVLIA…TLDSGLAHLH (120 aa)) form the PINc domain. Mg(2+) is bound by residues Asp6 and Asp97.

Belongs to the PINc/VapC protein family. It depends on Mg(2+) as a cofactor.

Toxic component of a type II toxin-antitoxin (TA) system. Its cognate antitoxin is VapB29. Has ribonuclease activity. This is Ribonuclease VapC29 from Mycobacterium tuberculosis (strain CDC 1551 / Oshkosh).